Reading from the N-terminus, the 138-residue chain is Basic phospholipase A2 PLA-B' (138 aa).

Positions 1 to 16 are cleaved as a signal peptide; sequence MRTLWITAVLLVGVEG. Disulfide bonds link C42/C131, C44/C60, C59/C111, C65/C138, C66/C104, C73/C97, and C91/C102. Residues Y43, G45, and G47 each contribute to the Ca(2+) site. Residue H63 is part of the active site. D64 provides a ligand contact to Ca(2+). Residue D105 is part of the active site.

It belongs to the phospholipase A2 family. Group II subfamily. D49 sub-subfamily. Ca(2+) is required as a cofactor. Expressed by the venom gland.

The protein localises to the secreted. The catalysed reaction is a 1,2-diacyl-sn-glycero-3-phosphocholine + H2O = a 1-acyl-sn-glycero-3-phosphocholine + a fatty acid + H(+). Functionally, PLA2 catalyzes the calcium-dependent hydrolysis of the 2-acyl groups in 3-sn-phosphoglycerides. The chain is Basic phospholipase A2 PLA-B' from Protobothrops flavoviridis (Habu).